Reading from the N-terminus, the 151-residue chain is PTITNDGVSIAKEIELEDPYEKIGAELVKEVAKKTDDVAGDGTTTATVLAQALVREGLRNVAAGANPLGLKRGIEKAVEKVTETLLKSAKEVETKDQIAATAAISAGDQSIGDLIAEAMDKVGNEGVITVEESNTFGLQLELTEGMRFDKG.

41–45 (DGTTT) contacts ATP.

The protein belongs to the chaperonin (HSP60) family. In terms of assembly, forms a cylinder of 14 subunits composed of two heptameric rings stacked back-to-back. Interacts with the co-chaperonin GroES.

It is found in the cytoplasm. It carries out the reaction ATP + H2O + a folded polypeptide = ADP + phosphate + an unfolded polypeptide.. Together with its co-chaperonin GroES, plays an essential role in assisting protein folding. The GroEL-GroES system forms a nano-cage that allows encapsulation of the non-native substrate proteins and provides a physical environment optimized to promote and accelerate protein folding. The sequence is that of Chaperonin GroEL from Mycobacterium avium.